Consider the following 179-residue polypeptide: MGSLPEKDFPQVHRFITTHKEDGTPTFETKIPEPIEWERTNIGVDFFLAYTLGSFPAPLSHDADLNQYKDHLVNHPPFMIPGGAVVRYVDYHPGCEPMWHRTVTVDFGVVIEGELELEVEGGEKRLMKRGDVAVQRGTNHCWRNPSKTQFARALYIALDAKPVIVNGQELGESLGEVKH.

One can recognise a Cupin type-2 domain in the interval 88–148 (YVDYHPGCEP…NHCWRNPSKT (61 aa)).

The protein belongs to the oryJ family.

The protein operates within secondary metabolite biosynthesis. In terms of biological role, part of the gene cluster that mediates the biosynthesis of oryzines, natural products with an unusual maleidride backbone. The two subunits of the fungal fatty acid synthase oryfasA and oryfasB probably form octenoic acid. This fatty acid is most likely activated by the acyl-CoA ligase oryP to give octenyl-CoA before the citrate synthase-like protein oryE catalyzes condensation with oxaloacetate to form tricarboxylic acid. The next steps of the pathways are conjectural, but a favorite possible route has been proposed, beginning with decarboxylation and concomitant dehydration by the decarboxylase oryM, followed by tautomerization, which may lead to the production of a diene intermediate. Reduction of this diene intermediate could give the known metabolite piliformic acid. On the pathway to oryzine B and oryzine A, however, hydroxylation of the diene by the alpha-ketoglutarate-dependent dioxygenase oryG and lactonisation by the lactonohydrolases oryH or oryL could give oryzine B directly. Finally, enoyl reduction by the dehydrogenase oryD would then convert oryzine B into oryzine A. This Aspergillus oryzae (strain ATCC 42149 / RIB 40) (Yellow koji mold) protein is Oryzines biosynthesis cluster protein J.